Reading from the N-terminus, the 241-residue chain is DnaA regulatory inactivator Hda (241 aa).

Belongs to the DnaA family. HdA subfamily. In terms of assembly, the active form seems to be an ADP-bound monomer. Forms the RIDA complex (regulatory inactivation of DnaA) of ATP-DnaA, ADP-Hda and the DNA-loaded beta sliding clamp (dnaN).

Functionally, mediates the interaction of DNA replication initiator protein DnaA with DNA polymerase subunit beta sliding clamp (dnaN). Stimulates hydrolysis of ATP-DnaA to ADP-DnaA, rendering DnaA inactive for reinitiation, a process called regulatory inhibition of DnaA or RIDA. This Salmonella agona (strain SL483) protein is DnaA regulatory inactivator Hda.